Reading from the N-terminus, the 840-residue chain is Phosphatidylglycerol lysyltransferase (840 aa).

Over 1–8 (MTEELKNR) the chain is Cytoplasmic. A helical transmembrane segment spans residues 9–29 (LLSILKFVFAAVLFIAVVATL). At 30 to 52 (YHELAHINFKQTLEAFSKINRWY) the chain is on the extracellular side. Residues 53-73 (LVGLFICGGSAMILLSLYDLI) form a helical membrane-spanning segment. Topologically, residues 74 to 89 (LVKGLKLDIPLIRVFK) are cytoplasmic. The helical transmembrane segment at 90–110 (ISYIINALNAIVGFGGFIGAG) threads the bilayer. Residues 111–129 (FRAFIYKNYTTDRKKLVHA) lie on the Extracellular side of the membrane. Residues 130-150 (ISIILISMLMGLSLLSILVVL) form a helical membrane-spanning segment. The Cytoplasmic segment spans residues 151 to 167 (HIFDASHIINKVSWVRW). The chain crosses the membrane as a helical span at residues 168 to 188 (ILYVVALFLPLFIAYTMINPI). Topologically, residues 189 to 193 (DRNNK) are extracellular. The chain crosses the membrane as a helical span at residues 194 to 216 (YLGVYCTLVSSFEWLAAATVLYL). Over 217 to 229 (STVIVDINIAFTT) the chain is Cytoplasmic. The helical transmembrane segment at 230-250 (VIGIFIIAALSGLVSFIPGGF) threads the bilayer. The Extracellular segment spans residues 251–271 (GAFDLVVLLGLKSLGVPEEKV). The chain crosses the membrane as a helical span at residues 272-292 (LLALLLYRFAYYFVPVIIALI). At 293–335 (LSTFEFGSSARKYFEESKYFVPARDVTSFLFSYQKDIIAKIPS) the chain is on the cytoplasmic side. Residues 336 to 356 (FALATLVLITSFVFFINNITI) form a helical membrane-spanning segment. Over 357-366 (VYDGLYDDHH) the chain is Extracellular. Residues 367–387 (FAYYIMLSVHTSACLLLLINV) traverse the membrane as a helical segment. Residues 388 to 394 (RGVFKQS) are Cytoplasmic-facing. The next 2 helical transmembrane spans lie at 395 to 415 (RRAI…TIYT) and 416 to 436 (YASL…ILAY). The Cytoplasmic portion of the chain corresponds to 437-450 (RRSKVMKRPFRLKR). Residues 451 to 471 (LIFTIILSMLVLYVNHFIISE) traverse the membrane as a helical segment. Over 472-490 (TLYALDIYHIEMDTSLLKY) the chain is Extracellular. Residues 491-511 (YFWLTILVVVILVGIVAWLLG) traverse the membrane as a helical segment. At 512–840 (SRYTRPHQLE…LKVMRVIRHK (329 aa)) the chain is on the cytoplasmic side.

It belongs to the LPG synthase family.

It is found in the cell membrane. It catalyses the reaction L-lysyl-tRNA(Lys) + a 1,2-diacyl-sn-glycero-3-phospho-(1'-sn-glycerol) = a 1,2-diacyl-sn-glycero-3-phospho-1'-(3'-O-L-lysyl)-sn-glycerol + tRNA(Lys). Its function is as follows. Catalyzes the transfer of a lysyl group from L-lysyl-tRNA(Lys) to membrane-bound phosphatidylglycerol (PG), which produces lysylphosphatidylglycerol (LPG), a major component of the bacterial membrane with a positive net charge. LPG synthesis contributes to bacterial virulence as it is involved in the resistance mechanism against cationic antimicrobial peptides (CAMP) produces by the host's immune system (defensins, cathelicidins) and by the competing microorganisms (bacteriocins). In fact, the modification of anionic phosphatidylglycerol with positively charged L-lysine results in repulsion of the peptides. The polypeptide is Phosphatidylglycerol lysyltransferase (mprF) (Staphylococcus haemolyticus (strain JCSC1435)).